The sequence spans 213 residues: Adenylyl-sulfate kinase (213 aa).

The segment covering 1–17 (MPAHQLDDHNQETRSDD) has biased composition (basic and acidic residues). The disordered stretch occupies residues 1-20 (MPAHQLDDHNQETRSDDENI). 47–54 (GLSGSGKS) serves as a coordination point for ATP. The active-site Phosphoserine intermediate is the serine 121.

Belongs to the APS kinase family.

The catalysed reaction is adenosine 5'-phosphosulfate + ATP = 3'-phosphoadenylyl sulfate + ADP + H(+). It functions in the pathway sulfur metabolism; hydrogen sulfide biosynthesis; sulfite from sulfate: step 2/3. Functionally, catalyzes the synthesis of activated sulfate. The polypeptide is Adenylyl-sulfate kinase (Yersinia pestis).